We begin with the raw amino-acid sequence, 302 residues long: Actin maturation protease (302 aa).

Residues 1-26 are disordered; the sequence is MPHTNEDPTAQQAGVILDPPPPLPPP. Residues 85–205 are peptidase C39-like; that stretch reads SLIQEGPQCG…WAVISGVLFG (121 aa). Residue Cys93 is part of the active site.

This sequence belongs to the ACTMAP family.

It is found in the cytoplasm. The catalysed reaction is N-terminal N(alpha)-acetyl-L-methionyl-L-aspartyl-[protein] + H2O = N-terminal L-aspartyl-[protein] + N-acetyl-L-methionine. It catalyses the reaction N-terminal N(alpha)-acetyl-L-methionyl-L-glutamyl-[protein] + H2O = N-terminal L-glutamyl-[protein] + N-acetyl-L-methionine. The enzyme catalyses N-terminal N(alpha)-acetyl-L-cysteinyl-L-aspartyl-[protein] + H2O = N-terminal L-aspartyl-[protein] + N-acetyl-L-cysteine. It carries out the reaction N-terminal N(alpha)-acetyl-L-cysteinyl-L-glutamyl-[protein] + H2O = N-terminal L-glutamyl-[protein] + N-acetyl-L-cysteine. In terms of biological role, actin maturation protease that specifically mediates the cleavage of immature acetylated N-terminal actin, thereby contributing to actin maturation. Cleaves N-terminal acetylated methionine of immature cytoplasmic beta- and gamma-actin after translation. Cleaves N-terminal acetylated cysteine of muscle alpha-actin after canonical removal of N-terminal methionine. This chain is Actin maturation protease, found in Xenopus tropicalis (Western clawed frog).